The sequence spans 495 residues: MPYIKHIETKRISARTYYGRFCVLPLPAGQGITLGNALRRILLGDLVGFAATSANLAGASHEFDTLPGIRESVLEILLNIKQLVFKQISSRPKDTNRFAMRASLNLTGPATVTAKDLVLPSWMKVVDPSQYIATLASGASLEFEIQLSQGSGYRLRRTSLVPPGFTLPPPRDPLEPENDSKSETKSKSKGKSKNTSTSDVQLADTDVNAQIIDTDSNSTETEKEAPHIPSMRDDHMTLHIDAVFFPVTRVNYRVEEEVINGRRREELVIDIWTNGSLSPRKALDQAAVILIRMLASLQAPPPLLIEPEKKPTTKTIAKEIALTPIESLDLSVRSFNCLKRANITNVGKLIAYTRQELLQLKNFGTKSASEVVDVLNSRFKLALKGEEVTDQEQVVNQPSSQIATKKGARKKVNRASRPIDSKETRRSRNPVKSTASEVPEKMLRKSSKTKVKAPKSETLPKPSKSANLQQAEESLQVPKLRRKSELSSSQNPEET.

An alpha N-terminal domain (alpha-NTD) region spans residues 1 to 301; it reads MPYIKHIETK…RMLASLQAPP (301 aa). 2 disordered regions span residues 159–227 and 391–495; these read SLVP…EAPH and QEQV…PEET. The tract at residues 170-237 is insert; the sequence is PRDPLEPEND…IPSMRDDHMT (68 aa). The span at 172–186 shows a compositional bias: basic and acidic residues; sequence DPLEPENDSKSETKS. Composition is skewed to polar residues over residues 207–219 and 391–403; these read VNAQIIDTDSNST and QEQVVNQPSSQIA. Positions 317–495 are alpha C-terminal domain (alpha-CTD); it reads AKEIALTPIE…LSSSQNPEET (179 aa). Residues 417–426 show a composition bias toward basic and acidic residues; that stretch reads RPIDSKETRR. Residues 444 to 453 show a composition bias toward basic residues; sequence RKSSKTKVKA. Composition is skewed to polar residues over residues 464 to 473 and 486 to 495; these read KSANLQQAEE and LSSSQNPEET.

Belongs to the RNA polymerase alpha chain family. In terms of assembly, in plastids the minimal PEP RNA polymerase catalytic core is composed of four subunits: alpha, beta, beta', and beta''. When a (nuclear-encoded) sigma factor is associated with the core the holoenzyme is formed, which can initiate transcription.

It localises to the plastid. Its subcellular location is the chloroplast. It catalyses the reaction RNA(n) + a ribonucleoside 5'-triphosphate = RNA(n+1) + diphosphate. In terms of biological role, DNA-dependent RNA polymerase catalyzes the transcription of DNA into RNA using the four ribonucleoside triphosphates as substrates. The chain is DNA-directed RNA polymerase subunit alpha from Nephroselmis olivacea (Green alga).